The primary structure comprises 38 residues: Large ribosomal subunit protein bL36A (38 aa).

It belongs to the bacterial ribosomal protein bL36 family.

This chain is Large ribosomal subunit protein bL36A, found in Enterobacter sp. (strain 638).